Consider the following 129-residue polypeptide: Regulator of ribonuclease activity B (129 aa).

This sequence belongs to the RraB family. Interacts with the C-terminal region of Rne.

The protein resides in the cytoplasm. Globally modulates RNA abundance by binding to RNase E (Rne) and regulating its endonucleolytic activity. Can modulate Rne action in a substrate-dependent manner by altering the composition of the degradosome. This Shewanella denitrificans (strain OS217 / ATCC BAA-1090 / DSM 15013) protein is Regulator of ribonuclease activity B.